We begin with the raw amino-acid sequence, 386 residues long: F420 non-reducing hydrogenase II small subunit (386 aa).

A signal peptide (tat-type signal) is located at residues 1 to 51 (MVEMSTGMKNLTRTLESMDFLKMDRRTFMKAVSALGATAFLGTYQTEIVNA). [4Fe-4S] cluster contacts are provided by Cys67, Cys70, Cys178, Cys227, His273, Cys276, Cys296, and Cys302. [3Fe-4S] cluster is bound by residues Cys311, Cys330, and Cys333.

It belongs to the [NiFe]/[NiFeSe] hydrogenase small subunit family. As to quaternary structure, composed of a large subunit (VhtA), a small subunit (VhtG) and a cytochrome subunit (VhtC). [4Fe-4S] cluster is required as a cofactor. Requires [3Fe-4S] cluster as cofactor. In terms of processing, predicted to be exported by the Tat system. The position of the signal peptide cleavage has not been experimentally proven.

The protein resides in the cell membrane. The enzyme catalyses methanophenazine + H2 = dihydromethanophenazine. Functionally, part of the F420 non-reducing hydrogenase II complex that catalyzes the reduction of methanophenazine to dihydromethanophenazine. The chain is F420 non-reducing hydrogenase II small subunit from Methanosarcina mazei (strain ATCC BAA-159 / DSM 3647 / Goe1 / Go1 / JCM 11833 / OCM 88) (Methanosarcina frisia).